We begin with the raw amino-acid sequence, 878 residues long: Phosphoenolpyruvate carboxylase (878 aa).

Residues H137 and K545 contribute to the active site.

This sequence belongs to the PEPCase type 1 family. Mg(2+) serves as cofactor.

The catalysed reaction is oxaloacetate + phosphate = phosphoenolpyruvate + hydrogencarbonate. Forms oxaloacetate, a four-carbon dicarboxylic acid source for the tricarboxylic acid cycle. The sequence is that of Phosphoenolpyruvate carboxylase from Yersinia pestis bv. Antiqua (strain Antiqua).